We begin with the raw amino-acid sequence, 201 residues long: Cerebellin-4 (201 aa).

Residues 1-27 (MGSGRRALSAVPAVLLVLTLPGLPVWA) form the signal peptide. 2 N-linked (GlcNAc...) asparagine glycosylation sites follow: asparagine 29 and asparagine 88. The C1q domain occupies 66 to 201 (AANSKVAFSA…TFSGFLVFPL (136 aa)).

As to quaternary structure, homohexamer; disulfide-linked homotrimers. The trimers are assembled via the globular C1q domains. The trimers associate via N-terminal cysteine residues to form disulfide-linked hexamers. May form oligomers with CBLN1, CBLN2 and CBLN3 prior to secretion. Strongly interacts with DCC in a NTN1-displaceable fashion. Weakly binds to NRXN1 and NRXN2 long and short isoforms produced by alternative promoter usage. Interaction with NRXN3 short isoform is hardly detectable; no interaction at all with NRXN3 long isoform. Post-translationally, sialoglycoprotein.

It is found in the secreted. It localises to the synapse. Acts as a synaptic organizer in specific subsets of neurons in the brain. Essential for the formation and maintenance of inhibitory GABAergic synapses. Promotes the development of dendrite-targeting inhibitory GABAergic synapses made by somatostatin-positive interneurons. May contribute to the function of ventral medial habenula region of the brain implicated in the regulation of anxiety-related behaviors. May play a role in CBLN3 export from the endoplasmic reticulum and secretion. The polypeptide is Cerebellin-4 (CBLN4) (Homo sapiens (Human)).